The chain runs to 113 residues: Small ribosomal subunit protein bS6 (113 aa).

It belongs to the bacterial ribosomal protein bS6 family.

Its function is as follows. Binds together with bS18 to 16S ribosomal RNA. This is Small ribosomal subunit protein bS6 from Ruthia magnifica subsp. Calyptogena magnifica.